Here is a 144-residue protein sequence, read N- to C-terminus: Snaclec trimecetin subunit beta (144 aa).

Positions 1 to 23 are cleaved as a signal peptide; that stretch reads MGRFIFVSFGLLVVFLSLSGTAA. 3 disulfides stabilise this stretch: Cys25–Cys36, Cys53–Cys142, and Cys119–Cys134. Positions 32-143 constitute a C-type lectin domain; that stretch reads FRRYCYQVFQ…CSSKRYVVCK (112 aa).

It belongs to the snaclec family. In terms of assembly, heterodimer of subunits alpha and beta; disulfide-linked. As to expression, expressed by the venom gland.

It is found in the secreted. Snaclec that induces platelet aggregation in either human platelet rich plasma (PRP) or washed platelet suspensions. It causes aggregation in a dose-dependent manner even in the absence of various platelet agonists such as ADP or von Willebrand factor (vWF). Interestingly, it does not induce aggregation in rabbit PRP. A monoclonal antibody against the platelet GPIb receptor blocks the aggregation induced by trimecetin, suggesting that it acts by binding to GPIb (GP1BA/GP1BB). The sequence is that of Snaclec trimecetin subunit beta from Protobothrops mucrosquamatus (Taiwan habu).